The primary structure comprises 246 residues: Exosome complex component Rrp41 (246 aa).

The protein belongs to the RNase PH family. Rrp41 subfamily. As to quaternary structure, component of the archaeal exosome complex. Forms a hexameric ring-like arrangement composed of 3 Rrp41-Rrp42 heterodimers. The hexameric ring associates with a trimer of Rrp4 and/or Csl4 subunits.

The protein localises to the cytoplasm. In terms of biological role, catalytic component of the exosome, which is a complex involved in RNA degradation. Has 3'-&gt;5' exoribonuclease activity. Can also synthesize heteromeric RNA-tails. The chain is Exosome complex component Rrp41 from Pyrobaculum aerophilum (strain ATCC 51768 / DSM 7523 / JCM 9630 / CIP 104966 / NBRC 100827 / IM2).